Here is a 531-residue protein sequence, read N- to C-terminus: 2,3-bisphosphoglycerate-independent phosphoglycerate mutase (531 aa).

Residues Asp-15 and Ser-65 each contribute to the Mn(2+) site. Ser-65 functions as the Phosphoserine intermediate in the catalytic mechanism. Residues His-126, 155-156, Arg-187, Arg-193, 257-260, and Lys-330 each bind substrate; these read RD and RPDR. Mn(2+) is bound by residues Asp-397, His-401, Asp-438, His-439, and His-456.

The protein belongs to the BPG-independent phosphoglycerate mutase family. Monomer. It depends on Mn(2+) as a cofactor.

It catalyses the reaction (2R)-2-phosphoglycerate = (2R)-3-phosphoglycerate. Its pathway is carbohydrate degradation; glycolysis; pyruvate from D-glyceraldehyde 3-phosphate: step 3/5. In terms of biological role, catalyzes the interconversion of 2-phosphoglycerate and 3-phosphoglycerate. The polypeptide is 2,3-bisphosphoglycerate-independent phosphoglycerate mutase (Thermosynechococcus vestitus (strain NIES-2133 / IAM M-273 / BP-1)).